Reading from the N-terminus, the 242-residue chain is UPF0246 protein SPH_1662 (242 aa).

This sequence belongs to the UPF0246 family.

The sequence is that of UPF0246 protein SPH_1662 from Streptococcus pneumoniae (strain Hungary19A-6).